A 512-amino-acid polypeptide reads, in one-letter code: 2-isopropylmalate synthase (512 aa).

The Pyruvate carboxyltransferase domain maps to Ile-4–Lys-266. Residues Asp-13, His-201, His-203, and Asn-237 each coordinate Mn(2+). The tract at residues Glu-390–Lys-512 is regulatory domain.

This sequence belongs to the alpha-IPM synthase/homocitrate synthase family. LeuA type 1 subfamily. As to quaternary structure, homodimer. The cofactor is Mn(2+).

It localises to the cytoplasm. The enzyme catalyses 3-methyl-2-oxobutanoate + acetyl-CoA + H2O = (2S)-2-isopropylmalate + CoA + H(+). It functions in the pathway amino-acid biosynthesis; L-leucine biosynthesis; L-leucine from 3-methyl-2-oxobutanoate: step 1/4. Functionally, catalyzes the condensation of the acetyl group of acetyl-CoA with 3-methyl-2-oxobutanoate (2-ketoisovalerate) to form 3-carboxy-3-hydroxy-4-methylpentanoate (2-isopropylmalate). The polypeptide is 2-isopropylmalate synthase (Listeria welshimeri serovar 6b (strain ATCC 35897 / DSM 20650 / CCUG 15529 / CIP 8149 / NCTC 11857 / SLCC 5334 / V8)).